The following is a 61-amino-acid chain: Conotoxin LiC32 (61 aa).

A signal peptide spans 1 to 22 (MRCVPVFIILLLLSPSAPSVDA). A propeptide spanning residues 23–44 (HPKTKDDVPLASFHDDAKRTLQ) is cleaved from the precursor. A Cysteine amide modification is found at Cys-60.

It belongs to the conotoxin T superfamily. Contains 2 disulfide bonds that can be either 'C1-C3, C2-C4' or 'C1-C4, C2-C3', since these disulfide connectivities have been observed for conotoxins with cysteine framework V (for examples, see AC P0DQQ7 and AC P81755). In terms of tissue distribution, expressed by the venom duct.

The protein localises to the secreted. Has the ability to interact with the G-protein coupled somatostatin type 3 receptor (SSTR3). The ability was measured in competition binding experiments and the constant of inhibition (Ki) has been evaluated to be 3.5 uM. The chain is Conotoxin LiC32 from Conus lividus (Livid cone).